Here is a 319-residue protein sequence, read N- to C-terminus: Carbonic anhydrase, chloroplastic (319 aa).

The N-terminal 98 residues, Met1–Ser98, are a transit peptide targeting the chloroplast.

The protein belongs to the beta-class carbonic anhydrase family. As to quaternary structure, homohexamer.

The protein localises to the plastid. The protein resides in the chloroplast stroma. It carries out the reaction hydrogencarbonate + H(+) = CO2 + H2O. Its function is as follows. Reversible hydration of carbon dioxide. This Spinacia oleracea (Spinach) protein is Carbonic anhydrase, chloroplastic.